The sequence spans 332 residues: Methionine synthase (332 aa).

Zn(2+) is bound by residues histidine 211, cysteine 213, and cysteine 296.

The protein belongs to the archaeal MetE family. The cofactor is Zn(2+).

Its pathway is amino-acid biosynthesis; L-methionine biosynthesis via de novo pathway. In terms of biological role, catalyzes the transfer of a methyl group to L-homocysteine resulting in methionine formation. The physiological methyl donor is unknown. The polypeptide is Methionine synthase (Saccharolobus islandicus (strain Y.N.15.51 / Yellowstone #2) (Sulfolobus islandicus)).